Consider the following 111-residue polypeptide: P antigen family member 2 (111 aa).

Positions 1-66 are disordered; it reads MSELLRARSQ…NQAVPAFQGP (66 aa). A compositionally biased stretch (polar residues) spans 8–24; sequence RSQSSERGNDQESSQPV.

The protein belongs to the GAGE family.

This is P antigen family member 2 (PAGE2) from Homo sapiens (Human).